The chain runs to 1437 residues: DNA polymerase III PolC-type (1437 aa).

Positions 420-576 (YVIFDVETTG…YDSETTGHLC (157 aa)) constitute an Exonuclease domain.

Belongs to the DNA polymerase type-C family. PolC subfamily.

It is found in the cytoplasm. The enzyme catalyses DNA(n) + a 2'-deoxyribonucleoside 5'-triphosphate = DNA(n+1) + diphosphate. Its function is as follows. Required for replicative DNA synthesis. This DNA polymerase also exhibits 3' to 5' exonuclease activity. In Pediococcus pentosaceus (strain ATCC 25745 / CCUG 21536 / LMG 10740 / 183-1w), this protein is DNA polymerase III PolC-type.